The sequence spans 226 residues: Triosephosphate isomerase (226 aa).

12–14 contacts substrate; the sequence is NFK. The Electrophile role is filled by His96. Residue Glu144 is the Proton acceptor of the active site. Residues Ile149, Gly184, and 205-206 each bind substrate; that span reads AS.

Belongs to the triosephosphate isomerase family. Homotetramer; dimer of dimers.

Its subcellular location is the cytoplasm. It carries out the reaction D-glyceraldehyde 3-phosphate = dihydroxyacetone phosphate. Its pathway is carbohydrate biosynthesis; gluconeogenesis. It participates in carbohydrate degradation; glycolysis; D-glyceraldehyde 3-phosphate from glycerone phosphate: step 1/1. Involved in the gluconeogenesis. Catalyzes stereospecifically the conversion of dihydroxyacetone phosphate (DHAP) to D-glyceraldehyde-3-phosphate (G3P). The protein is Triosephosphate isomerase of Thermococcus kodakarensis (strain ATCC BAA-918 / JCM 12380 / KOD1) (Pyrococcus kodakaraensis (strain KOD1)).